The sequence spans 97 residues: Protein Vpr (97 aa).

The interval 1–42 (MEQAPEDQGPQREPYNEWTLELLEELKREAVRHFPRPWLHSL) is homooligomerization. 3 positions are modified to phosphoserine; by host: serine 79, serine 95, and serine 97.

It belongs to the HIV-1 VPR protein family. In terms of assembly, homooligomer, may form homodimer. Interacts with p6-gag region of the Pr55 Gag precursor protein through a (Leu-X-X)4 motif near the C-terminus of the P6gag protein. Interacts with host UNG. May interact with host RAD23A/HHR23A. Interacts with host VPRBP/DCAF1, leading to hijack the CUL4A-RBX1-DDB1-DCAF1/VPRBP complex, mediating ubiquitination of host proteins such as TERT and ZGPAT and arrest of the cell cycle in G2 phase. Post-translationally, phosphorylated on several residues by host. These phosphorylations regulate VPR activity for the nuclear import of the HIV-1 pre-integration complex.

Its subcellular location is the virion. It localises to the host nucleus. It is found in the host extracellular space. Functionally, during virus replication, may deplete host UNG protein, and incude G2-M cell cycle arrest. Acts by targeting specific host proteins for degradation by the 26S proteasome, through association with the cellular CUL4A-DDB1 E3 ligase complex by direct interaction with host VPRPB/DCAF-1. Cell cycle arrest reportedly occurs within hours of infection and is not blocked by antiviral agents, suggesting that it is initiated by the VPR carried into the virion. Additionally, VPR induces apoptosis in a cell cycle dependent manner suggesting that these two effects are mechanistically linked. Detected in the serum and cerebrospinal fluid of AIDS patient, VPR may also induce cell death to bystander cells. Its function is as follows. During virus entry, plays a role in the transport of the viral pre-integration (PIC) complex to the host nucleus. This function is crucial for viral infection of non-dividing macrophages. May act directly at the nuclear pore complex, by binding nucleoporins phenylalanine-glycine (FG)-repeat regions. The polypeptide is Protein Vpr (Human immunodeficiency virus type 1 group M subtype B (isolate ARV2/SF2) (HIV-1)).